The primary structure comprises 467 residues: 3-isopropylmalate dehydratase large subunit (467 aa).

Residues Cys-347, Cys-407, and Cys-410 each contribute to the [4Fe-4S] cluster site.

Belongs to the aconitase/IPM isomerase family. LeuC type 1 subfamily. As to quaternary structure, heterodimer of LeuC and LeuD. The cofactor is [4Fe-4S] cluster.

It carries out the reaction (2R,3S)-3-isopropylmalate = (2S)-2-isopropylmalate. Its pathway is amino-acid biosynthesis; L-leucine biosynthesis; L-leucine from 3-methyl-2-oxobutanoate: step 2/4. Functionally, catalyzes the isomerization between 2-isopropylmalate and 3-isopropylmalate, via the formation of 2-isopropylmaleate. This chain is 3-isopropylmalate dehydratase large subunit, found in Picosynechococcus sp. (strain ATCC 27264 / PCC 7002 / PR-6) (Agmenellum quadruplicatum).